The chain runs to 245 residues: Orotidine 5'-phosphate decarboxylase (245 aa).

Substrate-binding positions include D22, K44, 71–80, T131, R192, Q201, G221, and R222; that span reads DLKFHDIPNT. The active-site Proton donor is K73.

Belongs to the OMP decarboxylase family. Type 1 subfamily. Homodimer.

It carries out the reaction orotidine 5'-phosphate + H(+) = UMP + CO2. Its pathway is pyrimidine metabolism; UMP biosynthesis via de novo pathway; UMP from orotate: step 2/2. Its function is as follows. Catalyzes the decarboxylation of orotidine 5'-monophosphate (OMP) to uridine 5'-monophosphate (UMP). This Yersinia pseudotuberculosis serotype O:3 (strain YPIII) protein is Orotidine 5'-phosphate decarboxylase.